The following is a 212-amino-acid chain: MAETKEFKTLYNLFIDSYLQKLAQHSIPTNVTCAIHIGEVIGQFKNCALRITNKCMSNSRLSFTLMVESFIEVISLLPEKDRRAIAEEIGIDLDDVPSAVSKLEKNCNAYAEVNNIIDIQKLDIGECSAPPGQHMLLQIVNTGSAEANCGLQTIVKSLNKIYVPPIIENRLPYYDPWFLVGVAIILVIFTVAICSIRRNLALKYRYGTFLYV.

Residues 1 to 175 (MAETKEFKTL…IIENRLPYYD (175 aa)) are Virion surface-facing. Intrachain disulfides connect Cys-33/Cys-55, Cys-47/Cys-127, and Cys-107/Cys-149. A helical transmembrane segment spans residues 176–196 (PWFLVGVAIILVIFTVAICSI). Residues 197-212 (RRNLALKYRYGTFLYV) are Intravirion-facing.

The protein belongs to the orthopoxvirus OPG053 family. Component of the entry fusion complex (EFC) composed of OPG053, OPG076, OPG086, OPG094, OPG095, OPG099, OPG107, OPG143, OPG104, OPG147 and OPG155. Except for OPG095 and OPG052, each of the EFC proteins is required for assembly or stability of the complex. Disulfid bonds are oxidized in the cytoplasm by OPG088 protein. Post-translationally, unglycosylated because produced in viral factories instead of the classic ER -Golgi route.

The protein resides in the virion membrane. Functionally, component of the entry fusion complex (EFC), which consists of 11 proteins. During cell infection, this complex mediates entry of the virion core into the host cytoplasm by a two-step mechanism consisting of lipid mixing of the viral and cellular membranes and subsequent pore formation. This chain is EFC-associated protein OPG053 (OPG053), found in Homo sapiens (Human).